The primary structure comprises 449 residues: Trigger factor (449 aa).

The PPIase FKBP-type domain maps to 173 to 258 (GDRVTLDFVG…LKKVEWAHLP (86 aa)).

This sequence belongs to the FKBP-type PPIase family. Tig subfamily.

The protein localises to the cytoplasm. It catalyses the reaction [protein]-peptidylproline (omega=180) = [protein]-peptidylproline (omega=0). Involved in protein export. Acts as a chaperone by maintaining the newly synthesized protein in an open conformation. Functions as a peptidyl-prolyl cis-trans isomerase. The chain is Trigger factor from Cupriavidus metallidurans (strain ATCC 43123 / DSM 2839 / NBRC 102507 / CH34) (Ralstonia metallidurans).